A 252-amino-acid chain; its full sequence is ATP synthase subunit a, chloroplastic (252 aa).

5 helical membrane passes run 41-61, 100-120, 138-158, 204-224, and 225-245; these read GQVLITSWIVLGGVIIFTLLA, VPFLGTIFIFVFVSNWAGALL, DINTTVSLALLTSVSYFYAGI, LIVGVLVALVPLFVPIPLMLL, and GVFTSAIQALVFATLAGAYIG.

This sequence belongs to the ATPase A chain family. As to quaternary structure, F-type ATPases have 2 components, CF(1) - the catalytic core - and CF(0) - the membrane proton channel. CF(1) has five subunits: alpha(3), beta(3), gamma(1), delta(1), epsilon(1). CF(0) has four main subunits: a, b, b' and c.

The protein localises to the plastid. The protein resides in the chloroplast thylakoid membrane. In terms of biological role, key component of the proton channel; it plays a direct role in the translocation of protons across the membrane. This Oedogonium cardiacum (Filamentous green alga) protein is ATP synthase subunit a, chloroplastic.